Consider the following 120-residue polypeptide: ATP synthase subunit a (120 aa).

The next 4 membrane-spanning stretches (helical) occupy residues 2–22 (FFYS…YSYL), 29–49 (FFPF…VGIV), 59–79 (LNIT…LGFY), and 94–116 (IPFV…RSVG).

This sequence belongs to the ATPase A chain family. In terms of assembly, F-type ATPases have 2 components, CF(1) - the catalytic core - and CF(0) - the membrane proton channel. CF(1) has five subunits: alpha(3), beta(3), gamma(1), delta(1), epsilon(1). CF(0) has three main subunits: a, b and c.

Its subcellular location is the mitochondrion inner membrane. Its function is as follows. Mitochondrial membrane ATP synthase (F(1)F(0) ATP synthase or Complex V) produces ATP from ADP in the presence of a proton gradient across the membrane which is generated by electron transport complexes of the respiratory chain. F-type ATPases consist of two structural domains, F(1) - containing the extramembraneous catalytic core and F(0) - containing the membrane proton channel, linked together by a central stalk and a peripheral stalk. During catalysis, ATP synthesis in the catalytic domain of F(1) is coupled via a rotary mechanism of the central stalk subunits to proton translocation. Key component of the proton channel; it may play a direct role in the translocation of protons across the membrane. This chain is ATP synthase subunit a (ATP6), found in Naegleria fowleri (Brain eating amoeba).